Here is a 283-residue protein sequence, read N- to C-terminus: Elongation factor Ts (283 aa).

The interval 79 to 82 (TDFV) is involved in Mg(2+) ion dislocation from EF-Tu.

The protein belongs to the EF-Ts family.

It localises to the cytoplasm. Its function is as follows. Associates with the EF-Tu.GDP complex and induces the exchange of GDP to GTP. It remains bound to the aminoacyl-tRNA.EF-Tu.GTP complex up to the GTP hydrolysis stage on the ribosome. The polypeptide is Elongation factor Ts (Shewanella frigidimarina (strain NCIMB 400)).